The sequence spans 361 residues: MMHLLRRGAFAILLIVLLPSAALADLRLASWNIQHLGWNVGKDYPAVARIAAQFDFLAIQEVMNAEGIYRLRDTLEDATGAEWSVLYSDALGRNTYREKYAFLWREAAVEYVGGALTYIDEADRFAREPFSAVFRSRGTDQHFLAATVHITYGDRVADRVEEIEALRRYWDWLADVMPEYAGERILFGDFNLPPHHDGWASMRAVAEPLVTEGATTLSTHDRRYANLYDNLWVPKDHTLPLGDAGILPFPVVLSEVTGVYWDHEKARDRVSDHAPVYVLFEGNTLHDAVVAEIADQEAGCIDLNRASVSELTALPHIGEARAEAIKDGRPWNAVRDLKEIRGIGAGRLEEIKARGEACIEP.

Residues 1–24 (MMHLLRRGAFAILLIVLLPSAALA) form the signal peptide. His149 is an active-site residue.

Belongs to the DNase I family. It depends on Mg(2+) as a cofactor. Ca(2+) serves as cofactor.

The protein localises to the secreted. Its function is as follows. DNA nuclease able to digest short and long DNA substrate. Is resistant to ionic strength and thus active at high salt concentration. The chain is Deoxyribonuclease from Thioalkalivibrio sp. (strain K90mix).